Reading from the N-terminus, the 234-residue chain is Potassium/proton antiporter CemA (234 aa).

A run of 4 helical transmembrane segments spans residues 8–28, 117–137, 157–177, and 193–213; these read IPLR…WIPL, TICF…LFIL, ILFV…ELLI, and IILS…FKYW.

It belongs to the CemA family.

It localises to the plastid. It is found in the chloroplast inner membrane. The catalysed reaction is K(+)(in) + H(+)(out) = K(+)(out) + H(+)(in). In terms of biological role, contributes to K(+)/H(+) antiport activity by supporting proton efflux to control proton extrusion and homeostasis in chloroplasts in a light-dependent manner to modulate photosynthesis. Prevents excessive induction of non-photochemical quenching (NPQ) under continuous-light conditions. Indirectly promotes efficient inorganic carbon uptake into chloroplasts. In Citrus sinensis (Sweet orange), this protein is Potassium/proton antiporter CemA.